We begin with the raw amino-acid sequence, 374 residues long: Glutamate 5-kinase (374 aa).

Residue Lys-16 coordinates ATP. Ser-56, Asp-143, and Asn-155 together coordinate substrate. 175-176 (TD) is an ATP binding site. Positions 282-360 (RGRVVLDAGA…SEIEAVLGYV (79 aa)) constitute a PUA domain.

This sequence belongs to the glutamate 5-kinase family.

Its subcellular location is the cytoplasm. It catalyses the reaction L-glutamate + ATP = L-glutamyl 5-phosphate + ADP. It participates in amino-acid biosynthesis; L-proline biosynthesis; L-glutamate 5-semialdehyde from L-glutamate: step 1/2. In terms of biological role, catalyzes the transfer of a phosphate group to glutamate to form L-glutamate 5-phosphate. This Ralstonia pickettii (strain 12J) protein is Glutamate 5-kinase.